A 345-amino-acid polypeptide reads, in one-letter code: Aspartate--ammonia ligase (345 aa).

The protein belongs to the class-II aminoacyl-tRNA synthetase family. AsnA subfamily.

It is found in the cytoplasm. The enzyme catalyses L-aspartate + NH4(+) + ATP = L-asparagine + AMP + diphosphate + H(+). It participates in amino-acid biosynthesis; L-asparagine biosynthesis; L-asparagine from L-aspartate (ammonia route): step 1/1. In Bacteroides thetaiotaomicron (strain ATCC 29148 / DSM 2079 / JCM 5827 / CCUG 10774 / NCTC 10582 / VPI-5482 / E50), this protein is Aspartate--ammonia ligase.